A 430-amino-acid chain; its full sequence is Dihydroorotase (430 aa).

H57 and H59 together coordinate Zn(2+). Residues 59–61 (HLR) and N91 each bind substrate. Zn(2+) is bound by residues D151, H178, and H231. N277 is a binding site for substrate. D304 provides a ligand contact to Zn(2+). Residue D304 is part of the active site. Substrate-binding positions include H308 and 322 to 323 (PG).

Belongs to the metallo-dependent hydrolases superfamily. DHOase family. Class I DHOase subfamily. Zn(2+) is required as a cofactor.

It carries out the reaction (S)-dihydroorotate + H2O = N-carbamoyl-L-aspartate + H(+). Its pathway is pyrimidine metabolism; UMP biosynthesis via de novo pathway; (S)-dihydroorotate from bicarbonate: step 3/3. Catalyzes the reversible cyclization of carbamoyl aspartate to dihydroorotate. The polypeptide is Dihydroorotase (Mycobacterium leprae (strain TN)).